Here is an 852-residue protein sequence, read N- to C-terminus: Bifunctional isopimaradiene synthase, chloroplastic (852 aa).

The transit peptide at His-1–Tyr-53 directs the protein to the chloroplast. A substrate-binding site is contributed by Lys-252. Mg(2+)-binding residues include Asp-385 and Asp-387. A DXDD motif motif is present at residues Asp-385–Asp-388. A substrate-binding site is contributed by Lys-472. Mg(2+) is bound by residues Asp-604, Asp-608, Asn-748, Thr-752, and Glu-756. The short motif at Asp-604–Asp-608 is the DDXXD motif element.

This sequence belongs to the terpene synthase family. Tpsd subfamily. Mg(2+) serves as cofactor.

It localises to the plastid. Its subcellular location is the chloroplast. The enzyme catalyses (2E,6E,10E)-geranylgeranyl diphosphate = (+)-copalyl diphosphate. It carries out the reaction (+)-copalyl diphosphate = isopimara-7,15-diene + diphosphate. Its pathway is terpene metabolism; oleoresin biosynthesis. In terms of biological role, involved in defensive oleoresin formation in conifers in response to insect attack or other injury. Involved in diterpene (C20) olefins biosynthesis. Bifunctional enzyme that catalyzes two sequential cyclizations of geranylgeranyl diphosphate (GGPP) to isopimara-7,15-diene. This Abies balsamea (Balsam fir) protein is Bifunctional isopimaradiene synthase, chloroplastic (TPS-ISO).